A 363-amino-acid chain; its full sequence is S-adenosylmethionine decarboxylase proenzyme (363 aa).

Catalysis depends on residues Glu9 and Glu12. Ser69 functions as the Schiff-base intermediate with substrate; via pyruvic acid in the catalytic mechanism. Ser69 bears the Pyruvic acid (Ser); by autocatalysis mark. Cys83 acts as the Proton donor; for catalytic activity in catalysis. Catalysis depends on proton acceptor; for processing activity residues Ser232 and His245.

Belongs to the eukaryotic AdoMetDC family. Pyruvate serves as cofactor. In terms of processing, is synthesized initially as an inactive proenzyme. Formation of the active enzyme involves a self-maturation process in which the active site pyruvoyl group is generated from an internal serine residue via an autocatalytic post-translational modification. Two non-identical subunits are generated from the proenzyme in this reaction, and the pyruvate is formed at the N-terminus of the alpha chain, which is derived from the carboxyl end of the proenzyme. The post-translation cleavage follows an unusual pathway, termed non-hydrolytic serinolysis, in which the side chain hydroxyl group of the serine supplies its oxygen atom to form the C-terminus of the beta chain, while the remainder of the serine residue undergoes an oxidative deamination to produce ammonia and the pyruvoyl group blocking the N-terminus of the alpha chain.

The enzyme catalyses S-adenosyl-L-methionine + H(+) = S-adenosyl 3-(methylsulfanyl)propylamine + CO2. The protein operates within amine and polyamine biosynthesis; S-adenosylmethioninamine biosynthesis; S-adenosylmethioninamine from S-adenosyl-L-methionine: step 1/1. The polypeptide is S-adenosylmethionine decarboxylase proenzyme (SAMDC) (Spinacia oleracea (Spinach)).